The following is a 209-amino-acid chain: MSPIDRLILEFDTALRSVVGGANAQRPTPGSEFASNSGVDAAERKHAAGLMRVNHVGEVCAQALYQSQKLVARNSEIQAMLDYSGQEEMDHLAWCENRLQELGSHTSYLNPLWYAGSFAIGLAAGLAGDKWSLGFVAETEKQVESHLESHLKKLPKEDQRSRAIVDQMRIDEIAHGQAAKNAGGVNLPEPIQKIMHAMSKVMTTTAYKI.

Positions 58, 88, 91, 140, 172, and 175 each coordinate Fe cation.

The protein belongs to the COQ7 family. Fe cation serves as cofactor.

The protein resides in the cell membrane. The catalysed reaction is a 5-methoxy-2-methyl-3-(all-trans-polyprenyl)benzene-1,4-diol + AH2 + O2 = a 3-demethylubiquinol + A + H2O. Its pathway is cofactor biosynthesis; ubiquinone biosynthesis. In terms of biological role, catalyzes the hydroxylation of 2-nonaprenyl-3-methyl-6-methoxy-1,4-benzoquinol during ubiquinone biosynthesis. The protein is 3-demethoxyubiquinol 3-hydroxylase of Polynucleobacter necessarius subsp. necessarius (strain STIR1).